The chain runs to 281 residues: BEN domain-containing protein 6 (281 aa).

Disordered regions lie at residues 15–62 and 143–172; these read VLRK…ETPL and SFAS…PGEK. A coiled-coil region spans residues 19–99; that stretch reads RKRKRTETAN…RLRQSLVMLQ (81 aa). Low complexity predominate over residues 143–160; sequence SFASLCSNSNSTSSSPSS. Over residues 162 to 172 the composition is skewed to basic and acidic residues; it reads KAEEEQHPGEK. The BEN domain maps to 171-271; it reads EKQFTIERWQ…NCTKKPNASK (101 aa).

As to quaternary structure, interacts (via BEN domain) with RBPJ.

The protein localises to the nucleus. In terms of biological role, acts as a corepressor of recombining binding protein suppressor hairless (RBPJ) and inhibits Notch signaling in neural stem cells, thereby opposing their self-renewal and promoting neurogenesis. The chain is BEN domain-containing protein 6 (Bend6) from Mus musculus (Mouse).